The sequence spans 158 residues: Cyclic pyranopterin monophosphate synthase (158 aa).

Substrate is bound by residues 74–76 (MCH) and 112–113 (ME). The active site involves Asp-127.

Belongs to the MoaC family. As to quaternary structure, homohexamer; trimer of dimers.

It catalyses the reaction (8S)-3',8-cyclo-7,8-dihydroguanosine 5'-triphosphate = cyclic pyranopterin phosphate + diphosphate. It participates in cofactor biosynthesis; molybdopterin biosynthesis. Catalyzes the conversion of (8S)-3',8-cyclo-7,8-dihydroguanosine 5'-triphosphate to cyclic pyranopterin monophosphate (cPMP). The chain is Cyclic pyranopterin monophosphate synthase from Helicobacter pylori (strain G27).